Reading from the N-terminus, the 104-residue chain is Replication restart protein PriB (104 aa).

Residues 2–101 enclose the SSB domain; sequence TNRLVLSGTV…LHAEQIELID (100 aa). Cys-48 and Cys-80 are joined by a disulfide. The L45 loop motif lies at 82–89; sequence KAKNGLSK.

Belongs to the PriB family. In terms of assembly, homodimer. Primosome assembly occurs via a 'hand-off' mechanism. PriA binds to replication forks, subsequently PriB then DnaT bind; DnaT then displaces ssDNA to generate the helicase loading substrate, which allows DnaC to load helicase DnaB onto the fork. ssDNA is displaced from the PriB-ssDNA complex by DnaT. In a PriA-PriB-replication fork structure, movement of the PriA CRR domain exposes a surface to which PriB binds and contacts ssDNA emerging from the PriA pore. Binds PriA; binding is improved in the presence of ssDNA. Weakly binds DnaT; binding is improved in the presence of ssDNA; as DnaT levels increase PriB dissociates from ssDNA. Component of the replication restart primosome, which is composed of PriA, PriB, PriC, DnaB and DnaT; DnaG primase associates transiently with this complex. Component of the preprimosomal complex composed of one monomer of PriC and DnaT, two monomers of PriA, two dimers of PriB and one hexamer of DnaB. Post-translationally, an intersubunit disulfide bond is seen in some crystals.

Involved in the restart of stalled replication forks, which reloads the replicative helicase (DnaB) on sites other than the origin of replication; the PriA-PriB pathway is the major replication restart pathway. There are several restart pathways, the PriA-PriB pathway is subdivided into 2 distinct pathways. priB and priC have redundant roles in the cell. During primosome assembly it facilitates complex formation between PriA and DnaT on DNA; stabilizes PriA on DNA, presumably by preventing or inhibiting PriA DNA translocation activity. Forms a branched DNA-PriA-PriB complex when the lagging strand is single-stranded (ss)DNA. Binds ssDNA in the presence and absence of ssDNA DNA-binding protein (SSB), does not bind branched structures. DNA binding, forming spiral filaments on ssDNA, is cooperative. Stimulates the helicase activity of PriA. The homodimer binds 12 nucleotides of ssDNA. Binds homo-pyrimidine tracts better than homo-purine tracts. Its function is as follows. Genetic interactions among priB, dam, lexA, nagC, polA, rdgB, rdgB, rep and uup link the PriA-PriB replication restart pathway to DNA double-strand break repair. This is Replication restart protein PriB from Escherichia coli (strain K12).